A 504-amino-acid chain; its full sequence is Xanthotoxol synthase (504 aa).

The helical transmembrane segment at Pro3–His23 threads the bilayer. The interval Pro363–Ile368 is substrate specificity. Residue Cys444 coordinates heme.

It belongs to the cytochrome P450 family. The cofactor is heme.

It is found in the microsome membrane. The enzyme catalyses psoralen + reduced [NADPH--hemoprotein reductase] + O2 = xanthotoxol + oxidized [NADPH--hemoprotein reductase] + H2O + H(+). It catalyses the reaction 6-methoxycoumarin + reduced [NADPH--hemoprotein reductase] + O2 = scopoletin + oxidized [NADPH--hemoprotein reductase] + H2O + H(+). It functions in the pathway secondary metabolite biosynthesis. Its function is as follows. Involved in the biosynthesis of coumarins and furanocoumarins (FCs), natural products required for defense responses against attacks by predators with potential medical and agroindustrial usages such as anticoagulant, rodenticide and artificial vanilla substitutes. Catalyzes the conversion of psoralen into xanthotoxol and of 6-methoxycoumarin into scopoletin. Can also convert with a lower efficiency scopoletin into fraxetin and 7-methoxycoumarin into daphnetin-7-methylether, and use 7-methoxy-3-methylcoumarin as substrate. In Pastinaca sativa (Wild parsnip), this protein is Xanthotoxol synthase.